The sequence spans 358 residues: L-lysine 3-hydroxylase (358 aa).

Fe cation-binding residues include His178, Glu180, and His314. Residue Arg328 coordinates 2-oxoglutarate.

It belongs to the clavaminate synthase family. Fe(2+) serves as cofactor.

The enzyme catalyses L-lysine + 2-oxoglutarate + O2 = (3S)-3-hydroxy-L-lysine + succinate + CO2. Functionally, alpha-ketoglutarate-dependent dioxygenase that in vitro catalyzes the regio- and stereoselective hydroxylation of L-lysine, leading to (3S)-3-hydroxy-L-lysine. Can also use (5R)-5-hydroxy-L-lysine as substrate, but neither D-lysine nor L-ornithine. This is L-lysine 3-hydroxylase from Catenulispora acidiphila (strain DSM 44928 / JCM 14897 / NBRC 102108 / NRRL B-24433 / ID139908).